The sequence spans 425 residues: 2-oxoglutarate and iron-dependent oxygenase JMJD4 (425 aa).

Residues 141 to 300 (SRAFPEQDVY…IMWCFLQDEL (160 aa)) form the JmjC domain. Fe cation-binding residues include histidine 188, aspartate 190, and histidine 268.

It belongs to the JMJD6 family. Fe(2+) is required as a cofactor.

It is found in the cytoplasm. The enzyme catalyses L-lysyl-[protein] + 2-oxoglutarate + O2 = 4-hydroxy-L-lysyl-[protein] + succinate + CO2. Catalyzes the 2-oxoglutarate and iron-dependent C4-lysyl hydroxylation of ETF1 at 'Lys-63' thereby promoting the translational termination efficiency of ETF1. This is 2-oxoglutarate and iron-dependent oxygenase JMJD4 (JMJD4) from Gallus gallus (Chicken).